The primary structure comprises 411 residues: Tyrosine--tRNA ligase (411 aa).

Residue tyrosine 34 coordinates L-tyrosine. The short motif at 39 to 48 is the 'HIGH' region element; it reads CTATSLHIGS. L-tyrosine-binding residues include tyrosine 171 and glutamine 175. The 'KMSKS' region signature appears at 231-235; the sequence is KMGKT. Residue lysine 234 coordinates ATP. The S4 RNA-binding domain occupies 345 to 411; sequence ISAYELFHEA…GKKRHILVRV (67 aa).

This sequence belongs to the class-I aminoacyl-tRNA synthetase family. TyrS type 1 subfamily. As to quaternary structure, homodimer.

It is found in the cytoplasm. It catalyses the reaction tRNA(Tyr) + L-tyrosine + ATP = L-tyrosyl-tRNA(Tyr) + AMP + diphosphate + H(+). Its function is as follows. Catalyzes the attachment of tyrosine to tRNA(Tyr) in a two-step reaction: tyrosine is first activated by ATP to form Tyr-AMP and then transferred to the acceptor end of tRNA(Tyr). In Rickettsia africae (strain ESF-5), this protein is Tyrosine--tRNA ligase.